A 412-amino-acid chain; its full sequence is Cathepsin D (412 aa).

The N-terminal stretch at 1–20 (MQPSSLLPLALCLLAAPASA) is a signal peptide. The propeptide at 21–64 (LVRIPLHKFTSIRRTMSEVGGSVEDLIAKGPVSKYSQAVPAVTE) is activation peptide. O-linked (GalNAc...) threonine glycosylation occurs at threonine 63. The 329-residue stretch at 79–407 (YYGEIGIGTP…DRDNNRVGFA (329 aa)) folds into the Peptidase A1 domain. Intrachain disulfides connect cysteine 91/cysteine 160 and cysteine 110/cysteine 117. The active site involves aspartate 97. N-linked (GlcNAc...) asparagine glycans are attached at residues asparagine 134 and asparagine 263. An intrachain disulfide couples cysteine 286 to cysteine 290. Aspartate 295 is an active-site residue. A disulfide bridge connects residues cysteine 329 and cysteine 366.

This sequence belongs to the peptidase A1 family. Consists of a light chain and a heavy chain. Interacts with ADAM30; this leads to activation of CTSD. Interacts with GRN; stabilizes CTSD; increases its proteolytic activity. N- and O-glycosylated. In terms of processing, undergoes proteolytic cleavage and activation by ADAM30. Post-translationally, as well as the major heavy chain which starts at Leu-169, 2 minor forms starting at Gly-170 and Gly-171 have been identified. An additional form starting at Ala-168 has also been identified. As to expression, expressed in the aorta extracellular space (at protein level). Expressed in liver (at protein level).

It localises to the lysosome. The protein localises to the melanosome. Its subcellular location is the secreted. The protein resides in the extracellular space. The catalysed reaction is Specificity similar to, but narrower than, that of pepsin A. Does not cleave the 4-Gln-|-His-5 bond in B chain of insulin.. In terms of biological role, acid protease active in intracellular protein breakdown. Plays a role in APP processing following cleavage and activation by ADAM30 which leads to APP degradation. Involved in the pathogenesis of several diseases such as breast cancer and possibly Alzheimer disease. In Homo sapiens (Human), this protein is Cathepsin D (CTSD).